The following is a 310-amino-acid chain: tRNA dimethylallyltransferase (310 aa).

Glycine 14–serine 21 serves as a coordination point for ATP. Threonine 16–serine 21 contacts substrate. Interaction with substrate tRNA regions lie at residues aspartate 39 to glutamine 42 and glutamine 163 to arginine 167.

It belongs to the IPP transferase family. In terms of assembly, monomer. Mg(2+) is required as a cofactor.

It catalyses the reaction adenosine(37) in tRNA + dimethylallyl diphosphate = N(6)-dimethylallyladenosine(37) in tRNA + diphosphate. In terms of biological role, catalyzes the transfer of a dimethylallyl group onto the adenine at position 37 in tRNAs that read codons beginning with uridine, leading to the formation of N6-(dimethylallyl)adenosine (i(6)A). The protein is tRNA dimethylallyltransferase of Brucella ovis (strain ATCC 25840 / 63/290 / NCTC 10512).